We begin with the raw amino-acid sequence, 232 residues long: Phosphatidylserine decarboxylase proenzyme (232 aa).

Catalysis depends on Ser190, which acts as the Schiff-base intermediate with substrate; via pyruvic acid. The residue at position 190 (Ser190) is a Pyruvic acid (Ser); by autocatalysis.

Belongs to the phosphatidylserine decarboxylase family. PSD-A subfamily. As to quaternary structure, heterodimer of a large membrane-associated beta subunit and a small pyruvoyl-containing alpha subunit. Requires pyruvate as cofactor. Is synthesized initially as an inactive proenzyme. Formation of the active enzyme involves a self-maturation process in which the active site pyruvoyl group is generated from an internal serine residue via an autocatalytic post-translational modification. Two non-identical subunits are generated from the proenzyme in this reaction, and the pyruvate is formed at the N-terminus of the alpha chain, which is derived from the carboxyl end of the proenzyme. The post-translation cleavage follows an unusual pathway, termed non-hydrolytic serinolysis, in which the side chain hydroxyl group of the serine supplies its oxygen atom to form the C-terminus of the beta chain, while the remainder of the serine residue undergoes an oxidative deamination to produce ammonia and the pyruvoyl prosthetic group on the alpha chain.

The protein resides in the cell membrane. The catalysed reaction is a 1,2-diacyl-sn-glycero-3-phospho-L-serine + H(+) = a 1,2-diacyl-sn-glycero-3-phosphoethanolamine + CO2. It functions in the pathway phospholipid metabolism; phosphatidylethanolamine biosynthesis; phosphatidylethanolamine from CDP-diacylglycerol: step 2/2. In terms of biological role, catalyzes the formation of phosphatidylethanolamine (PtdEtn) from phosphatidylserine (PtdSer). The polypeptide is Phosphatidylserine decarboxylase proenzyme (Cereibacter sphaeroides (strain KD131 / KCTC 12085) (Rhodobacter sphaeroides)).